The sequence spans 171 residues: Crossover junction endodeoxyribonuclease RuvC (171 aa).

Residues Asp7, Glu66, and Asp138 contribute to the active site. Residues Asp7, Glu66, and Asp138 each contribute to the Mg(2+) site.

Belongs to the RuvC family. As to quaternary structure, homodimer which binds Holliday junction (HJ) DNA. The HJ becomes 2-fold symmetrical on binding to RuvC with unstacked arms; it has a different conformation from HJ DNA in complex with RuvA. In the full resolvosome a probable DNA-RuvA(4)-RuvB(12)-RuvC(2) complex forms which resolves the HJ. Mg(2+) is required as a cofactor.

It is found in the cytoplasm. The catalysed reaction is Endonucleolytic cleavage at a junction such as a reciprocal single-stranded crossover between two homologous DNA duplexes (Holliday junction).. Functionally, the RuvA-RuvB-RuvC complex processes Holliday junction (HJ) DNA during genetic recombination and DNA repair. Endonuclease that resolves HJ intermediates. Cleaves cruciform DNA by making single-stranded nicks across the HJ at symmetrical positions within the homologous arms, yielding a 5'-phosphate and a 3'-hydroxyl group; requires a central core of homology in the junction. The consensus cleavage sequence is 5'-(A/T)TT(C/G)-3'. Cleavage occurs on the 3'-side of the TT dinucleotide at the point of strand exchange. HJ branch migration catalyzed by RuvA-RuvB allows RuvC to scan DNA until it finds its consensus sequence, where it cleaves and resolves the cruciform DNA. The protein is Crossover junction endodeoxyribonuclease RuvC of Thiobacillus denitrificans (strain ATCC 25259 / T1).